Reading from the N-terminus, the 877-residue chain is Leucine--tRNA ligase (877 aa).

Residues 43 to 53 (PYPSGRIHMGH) carry the 'HIGH' region motif. The short motif at 628–632 (KMSKS) is the 'KMSKS' region element. K631 contributes to the ATP binding site.

The protein belongs to the class-I aminoacyl-tRNA synthetase family.

It localises to the cytoplasm. The catalysed reaction is tRNA(Leu) + L-leucine + ATP = L-leucyl-tRNA(Leu) + AMP + diphosphate. The protein is Leucine--tRNA ligase of Brucella canis (strain ATCC 23365 / NCTC 10854 / RM-666).